The primary structure comprises 430 residues: tRNA-2-methylthio-N(6)-dimethylallyladenosine synthase (430 aa).

The region spanning 1-110 (MKVHIFTYGC…VPDAVLNAKN (110 aa)) is the MTTase N-terminal domain. Positions 10, 46, 75, 146, 150, and 153 each coordinate [4Fe-4S] cluster. Positions 132 to 363 (RSSNHHAWVT…LNLQKTINKE (232 aa)) constitute a Radical SAM core domain. The TRAM domain maps to 366-427 (KSYLGKEVEV…AGPLYGEIKK (62 aa)).

It belongs to the methylthiotransferase family. MiaB subfamily. In terms of assembly, monomer. [4Fe-4S] cluster is required as a cofactor.

Its subcellular location is the cytoplasm. It carries out the reaction N(6)-dimethylallyladenosine(37) in tRNA + (sulfur carrier)-SH + AH2 + 2 S-adenosyl-L-methionine = 2-methylsulfanyl-N(6)-dimethylallyladenosine(37) in tRNA + (sulfur carrier)-H + 5'-deoxyadenosine + L-methionine + A + S-adenosyl-L-homocysteine + 2 H(+). Catalyzes the methylthiolation of N6-(dimethylallyl)adenosine (i(6)A), leading to the formation of 2-methylthio-N6-(dimethylallyl)adenosine (ms(2)i(6)A) at position 37 in tRNAs that read codons beginning with uridine. The sequence is that of tRNA-2-methylthio-N(6)-dimethylallyladenosine synthase from Fervidobacterium nodosum (strain ATCC 35602 / DSM 5306 / Rt17-B1).